The chain runs to 232 residues: MAKKGKKYQEALKLVDKTNLYDPKEAIELAKKTATAKFDETVEAHIKLGVDSRHADQQVRGAVVLPHGTGKTVRILVFAKGEKAIEAEKAGADYVGGDELVAKIQGENWFEFDVVVATPDMMGVVGRLGRVLGPKGLMPNPKSGTVTFDLTKAVNEIKAGKVEYRLDKTNIIHVPLGKASFEETQLVENFRTLLDAVVKAKPAAAKGQYLKSITVTSTMGPGIKINPLKVME.

This sequence belongs to the universal ribosomal protein uL1 family. As to quaternary structure, part of the 50S ribosomal subunit.

Its function is as follows. Binds directly to 23S rRNA. The L1 stalk is quite mobile in the ribosome, and is involved in E site tRNA release. In terms of biological role, protein L1 is also a translational repressor protein, it controls the translation of the L11 operon by binding to its mRNA. The chain is Large ribosomal subunit protein uL1 from Alkaliphilus oremlandii (strain OhILAs) (Clostridium oremlandii (strain OhILAs)).